The sequence spans 621 residues: (-)-beta-phellandrene synthase 1, chloroplastic (621 aa).

A chloroplast-targeting transit peptide spans M1–R49. Residues D372, D376, and D524 each coordinate Mg(2+). The DDXXD motif motif lies at D372–D376.

It belongs to the terpene synthase family. Tpsd subfamily. Mg(2+) serves as cofactor. It depends on Mn(2+) as a cofactor.

It localises to the plastid. It is found in the chloroplast. It carries out the reaction (2E)-geranyl diphosphate = (-)-beta-phellandrene + diphosphate. It participates in terpene metabolism; oleoresin biosynthesis. It functions in the pathway secondary metabolite biosynthesis; terpenoid biosynthesis. Functionally, monoterpene synthase (TPS) involved in the biosynthesis of monoterpene natural products included in conifer oleoresin secretions and volatile emissions; these compounds contribute to biotic and abiotic stress defense against herbivores and pathogens. Catalyzes the conversion of (2E)-geranyl diphosphate (GPP) to (-)-beta-phellandrene and, to a lower extent, to (-)-alpha-phellandrene. The sequence is that of (-)-beta-phellandrene synthase 1, chloroplastic from Pinus contorta (Shore pine).